The sequence spans 402 residues: CMP-sialic acid transporter 3 (402 aa).

At 1 to 42 the chain is on the cytoplasmic side; that stretch reads MSGEVECRVCHAKVQVPMAAAAVSKAYDIHRSSVSSRQRALN. Residues 43–63 traverse the membrane as a helical segment; the sequence is VLLVSGDCVLAGLQPILVYMC. Residues 64 to 73 are Lumenal-facing; it reads KVDGKFKFSP. The chain crosses the membrane as a helical span at residues 74 to 94; the sequence is VSVNFLTEITKIIFAIIMLCI. Residues 95-118 are Cytoplasmic-facing; the sequence is QARRLKVGEKPFLTVSTFMQAARN. Residues 119–139 traverse the membrane as a helical segment; that stretch reads NVLLAVPALFYAINNYMKFVM. Over 140-146 the chain is Lumenal; sequence QLYFNPA. Residues 147-167 form a helical membrane-spanning segment; that stretch reads TVKMLGNLKVLVIAVLLKVIM. Topologically, residues 168–170 are cytoplasmic; sequence RRR. Residues 171–191 traverse the membrane as a helical segment; it reads FSTIQWEALALLLIGISVNQL. Over 192–202 the chain is Lumenal; sequence KSLPEGSSTLG. Residues 203-223 traverse the membrane as a helical segment; that stretch reads LPVAAGAYLYTLFFVTVPALA. The Cytoplasmic segment spans residues 224–243; the sequence is SVYNEKALKSQFDTSIYLQN. A helical membrane pass occupies residues 244–264; it reads LFLYGYGAIFNFLGLVITAII. The Lumenal portion of the chain corresponds to 265–280; it reads QGPSSFNILEGHSKAT. The helical transmembrane segment at 281–301 threads the bilayer; sequence MFLICNNAAQGILSSFFFKYA. Residues 302–321 are Cytoplasmic-facing; it reads DTILKKYSSTIATIFTGVAS. A helical membrane pass occupies residues 322 to 342; that stretch reads AVLFGHTLTINFVLAISIVII. The Lumenal portion of the chain corresponds to 343–402; it reads SMHQYLSNQIKDEVPSSKIEMGDAHEHRSKESVVVNVSDSIATEAKHRHGTDERQPLLPV.

Belongs to the nucleotide-sugar transporter family. CMP-Sialate:CMP antiporter (TC 2.A.7.12) subfamily.

Its subcellular location is the golgi apparatus membrane. Its function is as follows. Sugar transporter involved in the transport of CMP-sialic acid from the cytoplasm into the Golgi. May transport important nucleotide sugars such as CMP-Kdo (2-keto-3-deoxy-D-manno-octulosonic acid) in physiological conditions. This is CMP-sialic acid transporter 3 from Oryza sativa subsp. indica (Rice).